Reading from the N-terminus, the 310-residue chain is Polyprenyl transferase ntnF (310 aa).

Transmembrane regions (helical) follow at residues 30-50 (HTPEGLSTASIGWLALFFYAI), 63-83 (FLGIFACYQITHGVFCMWNDI), 110-130 (AMVAFIIGLALSLGVTYAMLG), 154-174 (IWAPQAVLGLTMAACVLPPWV), 185-205 (LPASLFGAIFSWLVYLDLIYA), 230-250 (ACLTVLGALQIAFFAVAAFEA), 255-275 (FLWVFGIAVWAISVPWSILSL), and 286-306 (IFLVNAILGIYLAAVSGTDVW).

Belongs to the UbiA prenyltransferase family. Mg(2+) serves as cofactor.

It is found in the membrane. It participates in secondary metabolite biosynthesis; terpenoid biosynthesis. Its function is as follows. olyprenyl transferase; part of the gene cluster that mediates the biosynthesis of the meroterpenoids nectripenoids A and B, as well as cochliquninone D and isocochliquninone E. The pathway probably begins with the HR-PKS ntnH that catalyzes two chain-extension steps to form a reduced triketide, which then primes the SAT domain in the NR-PKS ntnG to initiate three more cycles of extension to give a linear hexaketide corresponding to the polyketide part of nectripenoids. The FAD-dependent monooxygenase ntnJ then performs an oxidative decarboxylation at C11 of the ntnH/ntnG product, via an electrophilic aromatic hydroxylation with concomitant ipso-decarboxylation. The membrane-bound polyprenyl transferase ntnF then introduces a farnesyl group before the FAD-dependent monooxygenase ntnK functions as the first epoxidase on terminal C12'-C13' olefin, followed by a second epoxidation on C7'-C8' catalyzed by ntnA. The terpene cyclase/mutase ntnI then initiates the sequential tricyclic ring formation through protonation of the terminal epoxide and catalyzes the regioselective and stereoselective 6/6/6-tricyclic ring formation. The cytochrome P450 monooxygenase ntnM may then hydroxylate C1'. This is Polyprenyl transferase ntnF from Nectria sp.